A 284-amino-acid chain; its full sequence is Ribose-phosphate pyrophosphokinase (284 aa).

ATP-binding positions include 34–36 (DNE) and 92–93 (RQ). 2 residues coordinate Mg(2+): His125 and Asp163. Lys186 is a catalytic residue. D-ribose 5-phosphate is bound by residues Arg188, Asp212, and 216-220 (STGGT).

Belongs to the ribose-phosphate pyrophosphokinase family. Class III (archaeal) subfamily. In terms of assembly, homotetramer. Mg(2+) is required as a cofactor.

Its subcellular location is the cytoplasm. The catalysed reaction is D-ribose 5-phosphate + ATP = 5-phospho-alpha-D-ribose 1-diphosphate + AMP + H(+). The protein operates within metabolic intermediate biosynthesis; 5-phospho-alpha-D-ribose 1-diphosphate biosynthesis; 5-phospho-alpha-D-ribose 1-diphosphate from D-ribose 5-phosphate (route I): step 1/1. Its activity is regulated as follows. Activated by inorganic phosphate, with a maximal activity at 190 mM. Above this concentration inorganic phosphate progressively inhibits the kinase. Completely inhibited by ADP, and partially inhibited by alpha,beta-methylene ATP (mATP). Lack of allosteric regulation. Involved in the biosynthesis of the central metabolite phospho-alpha-D-ribosyl-1-pyrophosphate (PRPP) via the transfer of pyrophosphoryl group from ATP to 1-hydroxyl of ribose-5-phosphate (Rib-5-P). It can also use dATP as diphosphoryl donor. This is Ribose-phosphate pyrophosphokinase from Methanocaldococcus jannaschii (strain ATCC 43067 / DSM 2661 / JAL-1 / JCM 10045 / NBRC 100440) (Methanococcus jannaschii).